A 275-amino-acid chain; its full sequence is Intercellular adhesion molecule 2 (275 aa).

The N-terminal stretch at Met1–Glu24 is a signal peptide. Over Lys25 to Gln223 the chain is Extracellular. Residues Lys41–Lys98 form the Ig-like C2-type 1 domain. N-linked (GlcNAc...) asparagine glycosylation is found at Asn47, Asn82, Asn105, Asn153, Asn158, Asn176, and Asn187. 2 disulfides stabilise this stretch: Cys48-Cys91 and Cys52-Cys95. The 71-residue stretch at Gly127–Ile197 folds into the Ig-like C2-type 2 domain. The cysteines at positions 134 and 190 are disulfide-linked. Residues Met224–Phe248 traverse the membrane as a helical segment. Residues Gly249 to Pro275 are Cytoplasmic-facing. The interval His251–Pro275 is required for interaction with EZR, MSN and RDX and co-localization to microvilli.

The protein belongs to the immunoglobulin superfamily. ICAM family. As to quaternary structure, interacts with RDX, EZR and MSN.

It localises to the membrane. The protein localises to the cell projection. It is found in the microvillus. Functionally, ICAM proteins are ligands for the leukocyte adhesion protein LFA-1 (integrin alpha-L/beta-2). ICAM2 may play a role in lymphocyte recirculation by blocking LFA-1-dependent cell adhesion. It mediates adhesive interactions important for antigen-specific immune response, NK-cell mediated clearance, lymphocyte recirculation, and other cellular interactions important for immune response and surveillance. The polypeptide is Intercellular adhesion molecule 2 (ICAM2) (Gorilla gorilla gorilla (Western lowland gorilla)).